The sequence spans 717 residues: Fatty acid oxidation complex subunit alpha (717 aa).

Residues methionine 1–proline 190 are enoyl-CoA hydratase. The tract at residues arginine 306 to valine 717 is 3-hydroxyacyl-CoA dehydrogenase.

The protein in the N-terminal section; belongs to the enoyl-CoA hydratase/isomerase family. In the central section; belongs to the 3-hydroxyacyl-CoA dehydrogenase family. In terms of assembly, heterotetramer of two alpha chains (FadJ) and two beta chains (FadI).

Its subcellular location is the cytoplasm. It carries out the reaction a (3S)-3-hydroxyacyl-CoA = a (2E)-enoyl-CoA + H2O. The enzyme catalyses a 4-saturated-(3S)-3-hydroxyacyl-CoA = a (3E)-enoyl-CoA + H2O. The catalysed reaction is a (3S)-3-hydroxyacyl-CoA + NAD(+) = a 3-oxoacyl-CoA + NADH + H(+). It catalyses the reaction (3S)-3-hydroxybutanoyl-CoA = (3R)-3-hydroxybutanoyl-CoA. Its pathway is lipid metabolism; fatty acid beta-oxidation. Functionally, catalyzes the formation of a hydroxyacyl-CoA by addition of water on enoyl-CoA. Also exhibits 3-hydroxyacyl-CoA epimerase and 3-hydroxyacyl-CoA dehydrogenase activities. The polypeptide is Fatty acid oxidation complex subunit alpha (Cronobacter sakazakii (strain ATCC BAA-894) (Enterobacter sakazakii)).